The chain runs to 890 residues: Major vault protein (890 aa).

9 MVP repeats span residues 2–56 (SMEE…VPPR), 57–111 (HYCM…DITP), 112–164 (LQVV…EIIQ), 165–217 (ATVI…DVVD), 218–272 (AVIL…GVVS), 273–323 (VTTL…IQNV), 324–379 (YVLS…ERQA), 380–457 (IPLD…KTRV), and 458–520 (VSYR…LLGP). Residues 425–455 (ELLNKGQDPLADRGEKETSKTPKLSTPRNKT) form a disordered region. Residues 434–444 (LADRGEKETSK) show a composition bias toward basic and acidic residues. Lys-444 participates in a covalent cross-link: Glycyl lysine isopeptide (Lys-Gly) (interchain with G-Cter in SUMO2).

As to quaternary structure, the vault ribonucleoprotein particle is a huge (400 A x 670 A) cage structure of 12.9 MDa. It consists of a dimer of half-vaults, with each half-vault comprising 39 identical major vault protein (MVP) chains, PARP4 and one or more vault RNAs (vRNAs). Interacts with TEP1. Interacts with PTEN and activated MAPK1. The phosphorylated protein interacts with the SH2 domains of PTPN11 and SRC. Interacts with APEX1. May interact with ZNF540. Phosphorylated on Tyr residues after EGF stimulation. In terms of processing, dephosphorylated by PTPN11.

The protein localises to the cytoplasm. Its subcellular location is the nucleus. Functionally, required for normal vault structure. Vaults are multi-subunit structures that may act as scaffolds for proteins involved in signal transduction. Vaults may also play a role in nucleo-cytoplasmic transport. Down-regulates IFNG-mediated STAT1 signaling and subsequent activation of JAK. Down-regulates SRC activity and signaling through MAP kinases. This is Major vault protein (MVP) from Bos taurus (Bovine).